We begin with the raw amino-acid sequence, 120 residues long: Large ribosomal subunit protein eL18 (120 aa).

This sequence belongs to the eukaryotic ribosomal protein eL18 family.

In Pyrococcus horikoshii (strain ATCC 700860 / DSM 12428 / JCM 9974 / NBRC 100139 / OT-3), this protein is Large ribosomal subunit protein eL18.